Reading from the N-terminus, the 304-residue chain is N-acetylmuramic acid 6-phosphate etherase (304 aa).

One can recognise an SIS domain in the interval 60 to 221; the sequence is GVSVLRHGGR…STAVMVRLGY (162 aa). The active-site Proton donor is Glu-88. Glu-119 is an active-site residue.

This sequence belongs to the GCKR-like family. MurNAc-6-P etherase subfamily. Homodimer.

It carries out the reaction N-acetyl-D-muramate 6-phosphate + H2O = N-acetyl-D-glucosamine 6-phosphate + (R)-lactate. It participates in amino-sugar metabolism; N-acetylmuramate degradation. In terms of biological role, specifically catalyzes the cleavage of the D-lactyl ether substituent of MurNAc 6-phosphate, producing GlcNAc 6-phosphate and D-lactate. The protein is N-acetylmuramic acid 6-phosphate etherase of Thermobifida fusca (strain YX).